Consider the following 337-residue polypeptide: tRNA N6-adenosine threonylcarbamoyltransferase (337 aa).

His-114 and His-118 together coordinate Fe cation. Substrate is bound by residues 136 to 140, Asp-169, Gly-182, Asp-186, and Asn-275; that span reads LVSGG. Asp-301 is a binding site for Fe cation.

Belongs to the KAE1 / TsaD family. Requires Fe(2+) as cofactor.

It localises to the cytoplasm. The enzyme catalyses L-threonylcarbamoyladenylate + adenosine(37) in tRNA = N(6)-L-threonylcarbamoyladenosine(37) in tRNA + AMP + H(+). Its function is as follows. Required for the formation of a threonylcarbamoyl group on adenosine at position 37 (t(6)A37) in tRNAs that read codons beginning with adenine. Is involved in the transfer of the threonylcarbamoyl moiety of threonylcarbamoyl-AMP (TC-AMP) to the N6 group of A37, together with TsaE and TsaB. TsaD likely plays a direct catalytic role in this reaction. In Streptococcus thermophilus (strain ATCC BAA-491 / LMD-9), this protein is tRNA N6-adenosine threonylcarbamoyltransferase.